The sequence spans 393 residues: MTNSNRIKLTWISFLSYALTGALVIVTGMVMGNIADYFHLPVSSMSNTFTFLNAGILISIFLNAWLMEIVPLKTQLRFGFILMVLAVAGLMFSHSLALFSAAMFVLGLVSGITMSIGTFLITQLYEGRQRGSRLLFTDSFFSMAGMIFPMVAAFLLARSIEWYWVYACIGLVYLAIFILTFGCEFPALGKHAQHSQAPVVKEKWGIGVLFLAVAALCYILGQLGFISWVPEYAKGLGMSLNDAGALVSDFWMSYMFGMWAFSFILRFFDLQRILTVLAGMAAVLMYLFITGTQAHMPWFILTLGFFSSAIYTSIITLGSQQTKVASPKLVNFILTCGTIGTMLTFVVTGPIVAHSGPQAALLTANGLYAVVFVMCFALGFVSRHRQHSAPATH.

Transmembrane regions (helical) follow at residues 11 to 31 (WISF…GMVM), 51 to 71 (FLNA…EIVP), 78 to 98 (FGFI…SLAL), 101 to 121 (AAMF…TFLI), 134 to 154 (LLFT…VAAF), 162 to 182 (WYWV…LTFG), 206 to 226 (IGVL…LGFI), 245 to 265 (ALVS…SFIL), 273 to 293 (ILTV…TGTQ), 298 to 318 (WFIL…ITLG), 332 to 352 (FILT…GPIV), and 361 to 381 (LLTA…LGFV).

Belongs to the major facilitator superfamily. TsgA family.

The protein resides in the cell inner membrane. The chain is Protein TsgA from Salmonella heidelberg (strain SL476).